A 1001-amino-acid chain; its full sequence is DNA topoisomerase 3-alpha (1001 aa).

Residues 35-179 enclose the Toprim domain; sequence KVLCVAEKND…NLQVLRARFS (145 aa). The Topo IA-type catalytic domain maps to 197–617; that stretch reads DQRVSDAVDV…QQVQKYKQVF (421 aa). Y362 serves as the catalytic O-(5'-phospho-DNA)-tyrosine intermediate. The tract at residues 400–424 is disordered; that stretch reads GGPTPRNGNKSDQAHPPIHPTKYTN. The C4-type zinc-finger motif lies at 658-685; sequence CPQCNKDMVLKTKKNGGFYLSCMGFPEC. Positions 774-792 are enriched in polar residues; sequence RMDNSQHPQPADSRQTGSS. The segment at 774-810 is disordered; that stretch reads RMDNSQHPQPADSRQTGSSKALAQTLPPPTAAGESNS. Residues C813, C815, C838, C843, C897, C899, C922, and C930 each coordinate Zn(2+). 2 consecutive GRF-type zinc fingers follow at residues 813–852 and 897–939; these read CNCG…ADSP and CLCS…VDEN. The interval 937–1001 is disordered; sequence DENTAPGTSG…HTRPFCPQNR (65 aa). Positions 953–964 are enriched in basic and acidic residues; the sequence is DRGRTLESEARS.

This sequence belongs to the type IA topoisomerase family. As to quaternary structure, binds ssDNA. Interacts (via N-terminal region) with BLM; the interaction is direct. Directly interacts with RMI1. Component of the RMI complex, containing at least TOP3A, RMI1 and RMI2. The RMI complex interacts with BLM. The cofactor is Mg(2+). In terms of tissue distribution, high expression is found in testis, heart, skeletal muscle and pancreas.

It is found in the mitochondrion matrix. The enzyme catalyses ATP-independent breakage of single-stranded DNA, followed by passage and rejoining.. In terms of biological role, releases the supercoiling and torsional tension of DNA introduced during the DNA replication and transcription by transiently cleaving and rejoining one strand of the DNA duplex. Introduces a single-strand break via transesterification at a target site in duplex DNA. The scissile phosphodiester is attacked by the catalytic tyrosine of the enzyme, resulting in the formation of a DNA-(5'-phosphotyrosyl)-enzyme intermediate and the expulsion of a 3'-OH DNA strand. The free DNA strand then undergoes passage around the unbroken strand thus removing DNA supercoils. Finally, in the religation step, the DNA 3'-OH attacks the covalent intermediate to expel the active-site tyrosine and restore the DNA phosphodiester backbone. As an essential component of the RMI complex it is involved in chromosome separation and the processing of homologous recombination intermediates to limit DNA crossover formation in cells. Has DNA decatenation activity. It is required for mtDNA decatenation and segregation after completion of replication, in a process that does not require BLM, RMI1 and RMI2. The polypeptide is DNA topoisomerase 3-alpha (TOP3A) (Homo sapiens (Human)).